Consider the following 276-residue polypeptide: Putative pyruvate, phosphate dikinase regulatory protein (276 aa).

152 to 159 (GISRTSKT) contacts ADP.

Belongs to the pyruvate, phosphate/water dikinase regulatory protein family. PDRP subfamily.

It carries out the reaction N(tele)-phospho-L-histidyl/L-threonyl-[pyruvate, phosphate dikinase] + ADP = N(tele)-phospho-L-histidyl/O-phospho-L-threonyl-[pyruvate, phosphate dikinase] + AMP + H(+). It catalyses the reaction N(tele)-phospho-L-histidyl/O-phospho-L-threonyl-[pyruvate, phosphate dikinase] + phosphate + H(+) = N(tele)-phospho-L-histidyl/L-threonyl-[pyruvate, phosphate dikinase] + diphosphate. Its function is as follows. Bifunctional serine/threonine kinase and phosphorylase involved in the regulation of the pyruvate, phosphate dikinase (PPDK) by catalyzing its phosphorylation/dephosphorylation. The sequence is that of Putative pyruvate, phosphate dikinase regulatory protein from Staphylococcus carnosus (strain TM300).